A 272-amino-acid polypeptide reads, in one-letter code: Acidic leucine-rich nuclear phosphoprotein 32 family member B (272 aa).

LRR repeat units follow at residues 18–38 (AVRE…EGLT), 43–64 (NLEF…PKLP), 65–87 (KLKK…AEEL), and 89–110 (SLTH…EPLK). An LRRCT domain is found at 123-161 (CEVTNRSDYRETVFRLLPQLSYLDGYDREDQEAPDSDVE). Positions 149-254 (DREDQEAPDS…DEDEDEEEEE (106 aa)) are enriched in acidic residues. Positions 149-272 (DREDQEAPDS…RETDDEGEDD (124 aa)) are disordered. Phosphoserine occurs at positions 164 and 171. Residues 255–265 (SGKGEKRKRET) show a composition bias toward basic and acidic residues. The Nuclear localization signal signature appears at 260–263 (KRKR). Threonine 265 bears the Phosphothreonine mark.

The protein belongs to the ANP32 family. As to quaternary structure, interacts with histones H3 and H4. Interacts with KLF5; this interaction induces promoter region-specific histone incorporation and inhibition of histone acetylation by ANP32B. In terms of processing, some glutamate residues are glycylated by TTLL8. This modification occurs exclusively on glutamate residues and results in a glycine chain on the gamma-carboxyl group. Post-translationally, directly cleaved by caspase-3/CASP3.

It localises to the nucleus. Functionally, multifunctional protein that is involved in the regulation of many processes including cell proliferation, apoptosis, cell cycle progression or transcription. Regulates the proliferation of neuronal stem cells, differentiation of leukemic cells and progression from G1 to S phase of the cell cycle. As negative regulator of caspase-3-dependent apoptosis, may act as an antagonist of ANP32A in regulating tissue homeostasis. Exhibits histone chaperone properties, able to recruit histones to certain promoters, thus regulating the transcription of specific genes. Also plays an essential role in the nucleocytoplasmic transport of specific mRNAs via the uncommon nuclear mRNA export receptor XPO1/CRM1. Participates in the regulation of adequate adaptive immune responses by acting on mRNA expression and cell proliferation. The chain is Acidic leucine-rich nuclear phosphoprotein 32 family member B (Anp32b) from Mus musculus (Mouse).